Here is a 160-residue protein sequence, read N- to C-terminus: H/ACA ribonucleoprotein complex subunit 2 (160 aa).

Position 15 is a phosphoserine (Ser-15). A Phosphothreonine modification is found at Thr-23.

The protein belongs to the eukaryotic ribosomal protein eL8 family. Component of the box H/ACA small nucleolar ribonucleoprotein (H/ACA snoRNP) complex consisting of Nop60B, Gar1, NPH2 and Nop10, and associated with H/ACA-type snoRNAs.

Its subcellular location is the nucleus. It localises to the nucleolus. Component of the box H/ACA small nucleolar ribonucleoprotein (H/ACA snoRNP) complex, which catalyzes pseudouridylation of rRNA. This involves the isomerization of uridine such that the ribose is subsequently attached to C5, instead of the normal N1. Pseudouridine ('psi') residues may serve to stabilize the conformation of rRNAs. Required for ribosome biogenesis. H/ACA snoRNP complex-dependent ribosome biogenesis is important in female germline cell differentiation during oogenesis. The protein is H/ACA ribonucleoprotein complex subunit 2 of Drosophila melanogaster (Fruit fly).